Reading from the N-terminus, the 248-residue chain is Protein PIMREG (248 aa).

A compositionally biased stretch (polar residues) spans 1–10 (MASRWQNMGT). Residues 1–32 (MASRWQNMGTSVRRRSLQHQEQLEDSKELQPV) form a disordered region. S11 and S16 each carry phosphoserine. 2 consecutive short sequence motifs (D-box) follow at residues 14–17 (RRSL) and 53–56 (RLPL). Residues 117–205 (KARRRKRGAQ…PSESDSDLEP (89 aa)) form a disordered region. S129 is subject to Phosphoserine. Phosphoserine; by UHMK1; in vitro is present on S131. 2 stretches are compositionally biased toward polar residues: residues 132-143 (PTHSLSQKSTRL) and 186-198 (PYSS…SPSE). Residues S199 and S201 each carry the phosphoserine modification.

As to quaternary structure, isoform 1 and isoform 2 interact with PICALM; this interaction may target PICALM to the nucleus. During mitosis, associates with HDAC2 and MTA2 subunits of the chromatin-remodeling NuRD complex; this association is strongest at prometaphase and decreases as the cell progresses through metaphase and anaphase. Ubiquitinated by the anaphase-promoting complex/cyclosome (APC/C) complex in the presence of FZR1, leading to its degradation by the proteasome during mitotic exit. However, degradation is not essential for normal mitotic progression within a single cell cycle. As to expression, expressed in thymus (at protein level). Detected in spleen, colon, ovary and small intestines.

The protein localises to the nucleus. It localises to the nucleolus. Its function is as follows. During mitosis, may play a role in the control of metaphase-to-anaphase transition. The sequence is that of Protein PIMREG from Homo sapiens (Human).